Consider the following 207-residue polypeptide: Small ribosomal subunit protein uS4 (207 aa).

Residues lysine 31–glycine 53 are disordered. The region spanning serine 97–valine 157 is the S4 RNA-binding domain.

The protein belongs to the universal ribosomal protein uS4 family. In terms of assembly, part of the 30S ribosomal subunit. Contacts protein S5. The interaction surface between S4 and S5 is involved in control of translational fidelity.

In terms of biological role, one of the primary rRNA binding proteins, it binds directly to 16S rRNA where it nucleates assembly of the body of the 30S subunit. With S5 and S12 plays an important role in translational accuracy. In Paracidovorax citrulli (strain AAC00-1) (Acidovorax citrulli), this protein is Small ribosomal subunit protein uS4.